Reading from the N-terminus, the 154-residue chain is Ribosome maturation factor RimP (154 aa).

This sequence belongs to the RimP family.

The protein localises to the cytoplasm. Required for maturation of 30S ribosomal subunits. The polypeptide is Ribosome maturation factor RimP (Clostridium perfringens (strain ATCC 13124 / DSM 756 / JCM 1290 / NCIMB 6125 / NCTC 8237 / Type A)).